A 722-amino-acid polypeptide reads, in one-letter code: Polyribonucleotide nucleotidyltransferase (722 aa).

The Mg(2+) site is built by Asp-495 and Asp-501. The region spanning 562–621 (PRLLSFRIDPELIGTVIGPGGRTIKGITERTNTKIDIEDGGIVTIASHDGAAAEEAQRII) is the KH domain. The region spanning 631–699 (GEIFPGSITR…NRGRINLTLR (69 aa)) is the S1 motif domain. Residues 700–722 (GVSQNGGMSNYPEPTPTPVAPLT) are disordered. The span at 712 to 722 (EPTPTPVAPLT) shows a compositional bias: pro residues.

It belongs to the polyribonucleotide nucleotidyltransferase family. The cofactor is Mg(2+).

The protein localises to the cytoplasm. It catalyses the reaction RNA(n+1) + phosphate = RNA(n) + a ribonucleoside 5'-diphosphate. Functionally, involved in mRNA degradation. Catalyzes the phosphorolysis of single-stranded polyribonucleotides processively in the 3'- to 5'-direction. This Prochlorococcus marinus (strain NATL2A) protein is Polyribonucleotide nucleotidyltransferase.